A 529-amino-acid polypeptide reads, in one-letter code: MRSEKSLTLAAPGEVRGPEGEQQDAGDFPEAGGGGGCCSSERLVINISGLRFETQLRTLSLFPDTLLGDPGRRVRFFDPLRNEYFFDRNRPSFDAILYYYQSGGRLRRPVNVPLDIFLEEIRFYQLGDEALAAFREDEGCLPEGGEDEKPLPSQPFQRQVWLLFEYPESSGPARGIAIVSVLVILISIVIFCLETLPQFRVDGRGGNNGGVSRVSPVSRGSQEEEEDEDDSYTFHHGITPGEMGTGGSSSLSTLGGSFFTDPFFLVETLCIVWFTFELLVRFSACPSKPAFFRNIMNIIDLVAIFPYFITLGTELVQQQEQQPASGGGGQNGQQAMSLAILRVIRLVRVFRIFKLSRHSKGLQILGKTLQASMRELGLLIFFLFIGVILFSSAVYFAEADDDDSLFPSIPDAFWWAVVTMTTVGYGDMYPMTVGGKIVGSLCAIAGVLTIALPVPVIVSNFNYFYHRETEQEEQGQYTHVTCGQPAPDLRATDNGLGKPDFPEANRERRPSYLPTPHRAYAEKRMLTEV.

Positions 1 to 33 (MRSEKSLTLAAPGEVRGPEGEQQDAGDFPEAGG) are disordered. The Cytoplasmic portion of the chain corresponds to 1–171 (MRSEKSLTLA…LLFEYPESSG (171 aa)). S3 is subject to Phosphoserine. A helical transmembrane segment spans residues 172–193 (PARGIAIVSVLVILISIVIFCL). At 194 to 262 (ETLPQFRVDG…TLGGSFFTDP (69 aa)) the chain is on the extracellular side. Residues 210-220 (GVSRVSPVSRG) are compositionally biased toward low complexity. Residues 210–233 (GVSRVSPVSRGSQEEEEDEDDSYT) are disordered. A helical membrane pass occupies residues 263-284 (FFLVETLCIVWFTFELLVRFSA). A lipid anchor (S-palmitoyl cysteine) is attached at C285. Over 285 to 295 (CPSKPAFFRNI) the chain is Cytoplasmic. Residues 296–316 (MNIIDLVAIFPYFITLGTELV) traverse the membrane as a helical segment. The Extracellular portion of the chain corresponds to 317–337 (QQQEQQPASGGGGQNGQQAMS). A helical; Voltage-sensor membrane pass occupies residues 338-358 (LAILRVIRLVRVFRIFKLSRH). The Cytoplasmic segment spans residues 359–373 (SKGLQILGKTLQASM). The S4-S5 linker stretch occupies residues 360 to 373 (KGLQILGKTLQASM). Residues 374–395 (RELGLLIFFLFIGVILFSSAVY) traverse the membrane as a helical segment. The Extracellular portion of the chain corresponds to 396-409 (FAEADDDDSLFPSI). The helical intramembrane region spans 410 to 421 (PDAFWWAVVTMT). The Selectivity filter signature appears at 422–427 (TVGYGD). Residues 422–429 (TVGYGDMY) lie within the membrane without spanning it. Over 430–436 (PMTVGGK) the chain is Extracellular. A helical membrane pass occupies residues 437-465 (IVGSLCAIAGVLTIALPVPVIVSNFNYFY). At 466–529 (HRETEQEEQG…YAEKRMLTEV (64 aa)) the chain is on the cytoplasmic side. Residues 488-513 (DLRATDNGLGKPDFPEANRERRPSYL) are disordered. The span at 500 to 510 (DFPEANRERRP) shows a compositional bias: basic and acidic residues. S511 carries the post-translational modification Phosphoserine; by PKA. Residues 527-529 (TEV) carry the PDZ-binding motif.

Belongs to the potassium channel family. A (Shaker) (TC 1.A.1.2) subfamily. Kv1.6/KCNA6 sub-subfamily. As to quaternary structure, homotetramer and heterotetramer of potassium channel proteins. Interacts with KCNAB1 and KCNAB2.

It localises to the cell membrane. It carries out the reaction K(+)(in) = K(+)(out). Functionally, voltage-gated potassium channel that mediates transmembrane potassium transport in excitable membranes. Forms tetrameric potassium-selective channels through which potassium ions pass in accordance with their electrochemical gradient. The channel alternates between opened and closed conformations in response to the voltage difference across the membrane. Can form functional homotetrameric channels and heterotetrameric channels that contain variable proportions of KCNA1, KCNA2, KCNA4, KCNA6, and possibly other family members as well; channel properties depend on the type of alpha subunits that are part of the channel. Channel properties are modulated by cytoplasmic beta subunits that regulate the subcellular location of the alpha subunits and promote rapid inactivation. Homotetrameric channels display rapid activation and slow inactivation. The polypeptide is Potassium voltage-gated channel subfamily A member 6 (KCNA6) (Homo sapiens (Human)).